A 414-amino-acid chain; its full sequence is Serine hydroxymethyltransferase (414 aa).

(6S)-5,6,7,8-tetrahydrofolate-binding positions include L117 and 121–123; that span reads GHL. An N6-(pyridoxal phosphate)lysine modification is found at K226. (6S)-5,6,7,8-tetrahydrofolate-binding positions include E241 and 349 to 351; that span reads TPF.

Belongs to the SHMT family. As to quaternary structure, homodimer. Requires pyridoxal 5'-phosphate as cofactor.

It localises to the cytoplasm. The catalysed reaction is (6R)-5,10-methylene-5,6,7,8-tetrahydrofolate + glycine + H2O = (6S)-5,6,7,8-tetrahydrofolate + L-serine. It participates in one-carbon metabolism; tetrahydrofolate interconversion. Its pathway is amino-acid biosynthesis; glycine biosynthesis; glycine from L-serine: step 1/1. In terms of biological role, catalyzes the reversible interconversion of serine and glycine with tetrahydrofolate (THF) serving as the one-carbon carrier. Also exhibits THF-independent aldolase activity toward beta-hydroxyamino acids, producing glycine and aldehydes, via a retro-aldol mechanism. The polypeptide is Serine hydroxymethyltransferase (Methanothrix thermoacetophila (strain DSM 6194 / JCM 14653 / NBRC 101360 / PT) (Methanosaeta thermophila)).